Here is a 557-residue protein sequence, read N- to C-terminus: Fanconi anemia group C protein homolog (557 aa).

Belongs to the multisubunit FA complex composed of FANCA, FANCB, FANCC, FANCE, FANCF, FANCG, FANCL/PHF9 and FANCM. This complex may also include HSP70. Interacts with ZBTB32. Upon IFNG induction, interacts with STAT1. Interacts with CDK1. Interacts with EIF2AK2.

It localises to the nucleus. It is found in the cytoplasm. Its function is as follows. DNA repair protein that may operate in a postreplication repair or a cell cycle checkpoint function. May be implicated in interstrand DNA cross-link repair and in the maintenance of normal chromosome stability. Upon IFNG induction, may facilitate STAT1 activation by recruiting STAT1 to IFNGR1. This Rattus norvegicus (Rat) protein is Fanconi anemia group C protein homolog (Fancc).